Here is a 452-residue protein sequence, read N- to C-terminus: Bifunctional protein GlmU (452 aa).

Residues 1–226 (MNFSAVILAA…PIEVEGVNDR (226 aa)) form a pyrophosphorylase region. Residues 8-11 (LAAG), Lys-22, Gln-73, 78-79 (GT), 100-102 (YGD), Gly-137, Glu-151, Asn-166, and Asn-224 each bind UDP-N-acetyl-alpha-D-glucosamine. Position 102 (Asp-102) interacts with Mg(2+). Asn-224 serves as a coordination point for Mg(2+). Positions 227–247 (AQLARLERAYQAAQAQKLLEQ) are linker. The tract at residues 248–452 (GVMLRDPSRF…IANWQRPTKK (205 aa)) is N-acetyltransferase. Arg-330 and Lys-348 together coordinate UDP-N-acetyl-alpha-D-glucosamine. Catalysis depends on His-360, which acts as the Proton acceptor. UDP-N-acetyl-alpha-D-glucosamine-binding residues include Tyr-363 and Asn-374. Acetyl-CoA contacts are provided by residues Ala-377, 383–384 (NY), Ser-402, Ala-420, and Arg-437.

In the N-terminal section; belongs to the N-acetylglucosamine-1-phosphate uridyltransferase family. This sequence in the C-terminal section; belongs to the transferase hexapeptide repeat family. In terms of assembly, homotrimer. Mg(2+) serves as cofactor.

The protein resides in the cytoplasm. The catalysed reaction is alpha-D-glucosamine 1-phosphate + acetyl-CoA = N-acetyl-alpha-D-glucosamine 1-phosphate + CoA + H(+). It catalyses the reaction N-acetyl-alpha-D-glucosamine 1-phosphate + UTP + H(+) = UDP-N-acetyl-alpha-D-glucosamine + diphosphate. It participates in nucleotide-sugar biosynthesis; UDP-N-acetyl-alpha-D-glucosamine biosynthesis; N-acetyl-alpha-D-glucosamine 1-phosphate from alpha-D-glucosamine 6-phosphate (route II): step 2/2. It functions in the pathway nucleotide-sugar biosynthesis; UDP-N-acetyl-alpha-D-glucosamine biosynthesis; UDP-N-acetyl-alpha-D-glucosamine from N-acetyl-alpha-D-glucosamine 1-phosphate: step 1/1. The protein operates within bacterial outer membrane biogenesis; LPS lipid A biosynthesis. Functionally, catalyzes the last two sequential reactions in the de novo biosynthetic pathway for UDP-N-acetylglucosamine (UDP-GlcNAc). The C-terminal domain catalyzes the transfer of acetyl group from acetyl coenzyme A to glucosamine-1-phosphate (GlcN-1-P) to produce N-acetylglucosamine-1-phosphate (GlcNAc-1-P), which is converted into UDP-GlcNAc by the transfer of uridine 5-monophosphate (from uridine 5-triphosphate), a reaction catalyzed by the N-terminal domain. This is Bifunctional protein GlmU from Aliivibrio fischeri (strain ATCC 700601 / ES114) (Vibrio fischeri).